Reading from the N-terminus, the 1131-residue chain is Plasma membrane ATPase (1131 aa).

6 helical membrane-spanning segments follow: residues 77–97 (PVLVFLGYMWNPLAWAMEAAA), 98–118 (IISIALLDVADFVLIVGLLLI), 151–171 (GAIVTIDAVNLVPGDVILIRL), 231–251 (AVVYATGVNTFFGRAAALISG), 265–285 (MSAICIVTILLWVVVELAVQF), and 305–325 (MLVVLVGGIPIAMPTVLSVTL). Catalysis depends on Asp357, which acts as the 4-aspartylphosphate intermediate. Mg(2+)-binding residues include Asp615 and Asp619. 5 helical membrane-spanning segments follow: residues 642–662 (AADIVLTEPGLSTIVTAVIGA), 689–709 (LITVIYDWYFPTILIVIMAVF), 733–753 (ITNIFIMGMVYGLYLTLSTWA), 884–904 (LAFFFAQVGATLFGIFGLGGF), and 946–966 (VIGCGGYVIVAWIWSAIWYVL). Residues 994-1010 (KRSLDRRSKDDIGDKEF) are compositionally biased toward basic and acidic residues. Disordered stretches follow at residues 994–1023 (KRSLDRRSKDDIGDKEFTGPSGMVPANYSN) and 1067–1131 (RRSM…TIRE). Residues 1089–1100 (SRTSNTLSTGSK) are compositionally biased toward polar residues. Over residues 1118 to 1131 (IKPDKYDFASTIRE) the composition is skewed to basic and acidic residues.

This sequence belongs to the cation transport ATPase (P-type) (TC 3.A.3) family. Type IIIA subfamily.

Its subcellular location is the cell membrane. The catalysed reaction is ATP + H2O + H(+)(in) = ADP + phosphate + 2 H(+)(out). In terms of biological role, the plasma membrane ATPase of plants and fungi is a hydrogen ion pump. The proton gradient it generates drives the active transport of nutrients by H(+)-symport. The resulting external acidification and/or internal alkinization may mediate growth responses. This chain is Plasma membrane ATPase (PMA1), found in Dunaliella bioculata (Green alga).